A 475-amino-acid chain; its full sequence is 7-dehydrocholesterol reductase (475 aa).

A disordered region spans residues 1 to 21 (MAAKSQPNIPKAKSLDGVTND). Phosphoserine is present on Ser14. Helical transmembrane passes span 40-60 (LASV…FIMA), 154-174 (THLL…TIIF), 177-197 (WIPL…FAMV), 266-286 (VTNA…DFFW), 306-326 (LGWG…LYLV), and 331-351 (QLST…YYIF). NADP(+)-binding positions include Lys358, Arg362, Leu395, Trp400, and 407 to 408 (NY). Residues 420-440 (LACGGGHLLPYFYIIYMAILL) traverse the membrane as a helical segment. Residues Asp447, 451–455 (CASKY), and Tyr462 contribute to the NADP(+) site.

This sequence belongs to the ERG4/ERG24 family. Interacts with DHCR24; this interaction regulates DHCR7 activity. Interacts with TMEM147. Widely expressed. Most abundant in adrenal gland, liver, testis, and brain.

The protein resides in the endoplasmic reticulum membrane. It catalyses the reaction cholesterol + NADP(+) = 7-dehydrocholesterol + NADPH + H(+). It carries out the reaction 7-dehydrodesmosterol + NADPH + H(+) = desmosterol + NADP(+). The catalysed reaction is 5,6alpha-epoxy-5alpha-cholestan-3beta-ol + H2O = 5alpha-cholestane-3beta,5,6beta-triol. The enzyme catalyses 5,6beta-epoxy-5beta-cholestan-3beta-ol + H2O = 5alpha-cholestane-3beta,5,6beta-triol. Its pathway is steroid biosynthesis; cholesterol biosynthesis. Its activity is regulated as follows. 7-DHC reductase and cholesterol-5,6-epoxide hydrolase (ChEH) activities are inhibited by tamoxifen and the selective AEBS ligand (4-benzyl-phenoxy)-ethyl-N-pyrrolidine (PBPE). ChEH activity is inhibited by oleic acid. Oxidoreductase that catalyzes the last step of the cholesterol synthesis pathway, which transforms cholesta-5,7-dien-3beta-ol (7-dehydrocholesterol,7-DHC) into cholesterol by reducing the C7-C8 double bond of its sterol core. Can also metabolize cholesta-5,7,24-trien-3beta-ol (7-dehydrodemosterol, 7-DHD) to desmosterol, which is then metabolized by the Delta(24)-sterol reductase (DHCR24) to cholesterol. Modulates ferroptosis (a form of regulated cell death driven by iron-dependent lipid peroxidation) through the metabolic breakdown of the anti-ferroptotic metabolites 7-DHC and 7-DHD which, when accumulated, divert the propagation of peroxyl radical-mediated damage from phospholipid components to its sterol core, protecting plasma and mitochondrial membranes from phospholipid autoxidation. In terms of biological role, component of the microsomal antiestrogen binding site (AEBS), a multiproteic complex at the ER membrane that consists of an association between cholestenol Delta-isomerase/EBP and DHCR7. This complex is responsible for cholesterol-5,6-epoxide hydrolase (ChEH) activity, which consists in the hydration of cholesterol-5,6-epoxides (5,6-EC) into cholestane-3beta,5alpha,6beta-triol (CT). The precise role of each component of this complex has not been described yet. The chain is 7-dehydrocholesterol reductase from Homo sapiens (Human).